Reading from the N-terminus, the 189-residue chain is GTPase NRas (189 aa).

GTP contacts are provided by residues 10 to 18 (GAGGVGKSA) and 29 to 30 (VD). An Effector region motif is present at residues 32–40 (YDPTIEDSY). GTP is bound at residue 57–61 (DTAGQ). Serine 89 bears the Phosphoserine mark. 116 to 119 (NKCD) serves as a coordination point for GTP. A hypervariable region region spans residues 166–185 (YRMKKLNSSEDGTQGCMGLP). Residue lysine 170 forms a Glycyl lysine isopeptide (Lys-Gly) (interchain with G-Cter in ubiquitin) linkage. Cysteine 181 carries the S-palmitoyl cysteine lipid modification. A lipid anchor (S-farnesyl cysteine) is attached at cysteine 186. The propeptide at 187 to 189 (VVM) is removed in mature form.

It belongs to the small GTPase superfamily. Ras family. In terms of assembly, interacts (active GTP-bound form preferentially) with RGS14. Interacts (active GTP-bound form) with RASSF7. Interacts (active GTP-bound form) with both SHOC2 and PP1c (all isoforms) to form a tertiary complex; SHOC2 and PP1c preferably bind M-Ras/MRAS, but they also bind K-Ras/KRAS, N-Ras/NRAS and H-Ras/HRAS. Palmitoylated by the ZDHHC9-GOLGA7 complex. Depalmitoylated by ABHD17A, ABHD17B and ABHD17C. A continuous cycle of de- and re-palmitoylation regulates rapid exchange between plasma membrane and Golgi. Post-translationally, acetylation at Lys-104 prevents interaction with guanine nucleotide exchange factors (GEFs). In terms of processing, ubiquitinated by the BCR(LZTR1) E3 ubiquitin ligase complex at Lys-170 in a non-degradative manner, leading to inhibit Ras signaling by decreasing Ras association with membranes. Phosphorylation at Ser-89 enhances NRAS association with its downstream effectors.

It localises to the cell membrane. It is found in the golgi apparatus membrane. It catalyses the reaction GTP + H2O = GDP + phosphate + H(+). Alternates between an inactive form bound to GDP and an active form bound to GTP. Activated by a guanine nucleotide-exchange factor (GEF) and inactivated by a GTPase-activating protein (GAP). Ras proteins bind GDP/GTP and possess intrinsic GTPase activity. This is GTPase NRas (Nras) from Rattus norvegicus (Rat).